Reading from the N-terminus, the 328-residue chain is Carbonic anhydrase-related protein 10 (328 aa).

Positions 31-301 (GWWAYKEVVQ…LNNRCIRTNI (271 aa)) constitute an Alpha-carbonic anhydrase domain.

The protein belongs to the alpha-carbonic anhydrase family.

Does not have a catalytic activity. The sequence is that of Carbonic anhydrase-related protein 10 (CA10) from Macaca fascicularis (Crab-eating macaque).